Consider the following 157-residue polypeptide: MATMHDKITLQLPAKPEYVSLGRLSLSGIASRAGFSYEAIEDLKIAVSEAITNSVKHAFKGEEDGEITVEYHIYEDKLEVRVSDNGTSFDLETRKQEIGPYEVGEDAEMMRIGGLGLFLIETLMDDVKLYYDEGVSVVMTKYINEKQVEENAKSIST.

This sequence belongs to the anti-sigma-factor family.

The catalysed reaction is L-seryl-[protein] + ATP = O-phospho-L-seryl-[protein] + ADP + H(+). The enzyme catalyses L-threonyl-[protein] + ATP = O-phospho-L-threonyl-[protein] + ADP + H(+). Functionally, negative regulator of sigma-B activity. Phosphorylates and inactivates its specific antagonist protein, RsbV. Upon phosphorylation of RsbV, RsbW is released and binds to sigma-B, thereby blocking its ability to form an RNA polymerase holoenzyme (E-sigma-B). This Listeria innocua serovar 6a (strain ATCC BAA-680 / CLIP 11262) protein is Serine-protein kinase RsbW.